A 258-amino-acid chain; its full sequence is Probable parvulin-type peptidyl-prolyl cis-trans isomerase (258 aa).

The first 19 residues, 1–19 (MKRIAMLAAACVIAVPAFA), serve as a signal peptide directing secretion. A PpiC domain is found at 127-219 (KMEYKVRHIL…FGWHVIQVDD (93 aa)).

It belongs to the PpiC/parvulin rotamase family.

The catalysed reaction is [protein]-peptidylproline (omega=180) = [protein]-peptidylproline (omega=0). The sequence is that of Probable parvulin-type peptidyl-prolyl cis-trans isomerase from Bordetella parapertussis (strain 12822 / ATCC BAA-587 / NCTC 13253).